Here is a 151-residue protein sequence, read N- to C-terminus: Large ribosomal subunit protein bL9 (151 aa).

It belongs to the bacterial ribosomal protein bL9 family.

In terms of biological role, binds to the 23S rRNA. The polypeptide is Large ribosomal subunit protein bL9 (Pelobacter propionicus (strain DSM 2379 / NBRC 103807 / OttBd1)).